A 322-amino-acid polypeptide reads, in one-letter code: NADH-quinone oxidoreductase subunit H (322 aa).

A run of 8 helical transmembrane segments spans residues 14 to 34 (IFMH…YMSF), 81 to 101 (YIFV…IPVI), 114 to 134 (VGVL…LLAG), 149 to 169 (SIAQ…GIVA), 186 to 206 (LWNI…GMAL), 237 to 257 (FFIS…TLFF), 265 to 285 (FPPV…FVLI), and 302 to 322 (WKFL…YILI).

Belongs to the complex I subunit 1 family. In terms of assembly, NDH-1 is composed of 13 different subunits. Subunits NuoA, H, J, K, L, M, N constitute the membrane sector of the complex.

It localises to the cell inner membrane. It carries out the reaction a quinone + NADH + 5 H(+)(in) = a quinol + NAD(+) + 4 H(+)(out). Its function is as follows. NDH-1 shuttles electrons from NADH, via FMN and iron-sulfur (Fe-S) centers, to quinones in the respiratory chain. The immediate electron acceptor for the enzyme in this species is believed to be ubiquinone. Couples the redox reaction to proton translocation (for every two electrons transferred, four hydrogen ions are translocated across the cytoplasmic membrane), and thus conserves the redox energy in a proton gradient. This subunit may bind ubiquinone. The protein is NADH-quinone oxidoreductase subunit H of Blochmanniella floridana.